A 212-amino-acid chain; its full sequence is Probable nicotinate-nucleotide adenylyltransferase (212 aa).

The protein belongs to the NadD family.

It catalyses the reaction nicotinate beta-D-ribonucleotide + ATP + H(+) = deamido-NAD(+) + diphosphate. It functions in the pathway cofactor biosynthesis; NAD(+) biosynthesis; deamido-NAD(+) from nicotinate D-ribonucleotide: step 1/1. Functionally, catalyzes the reversible adenylation of nicotinate mononucleotide (NaMN) to nicotinic acid adenine dinucleotide (NaAD). In Shewanella sp. (strain MR-7), this protein is Probable nicotinate-nucleotide adenylyltransferase.